Consider the following 524-residue polypeptide: MSQNSSSLLETWRQVVADLTTLSQQADSGFDPLTPTQRAYLNLTKPIAIVDGYAVLSTPNAMAKNVIENDLGDALTRVLSLRMGRSFSLAVSVEPEQEIPETPAQQEFKYQPDAPVISSNKAPKQYEVGGRGEASTSDGWERTHSAPAPEPHPAPIADPEPELATPQRIPRETPAHNPNREVSLNPKYTFESFVIGPFNRFANAAAVAVAESPAKAFNPLFISGGSGLGKTHLLHAVGNYAQELQPGLRIKYVSSEEFTNDYINSVRDDRQETFKRRYRNLDILMVDDIQFLAGKEGTQEEFFHTFNALHQADKQIILSSDRPPKQLTTLEDRLRTRFEGGLITDIQPPDLETRIAILMKKAQTDGTHVDREVLELIASRFESSIRELEGALIRVSAYSSLINQPIDKEMAIVALRDILPEPEDMEITAPVIMEVTAEYFEISVDTLRGAGKTRAVAHARQLAMYLCRELTDMSLPKIGDVFGGKDHTTVMYADRKIRQEMTEKRDTYDEIQQLTQLIKSRGRN.

Residues 1 to 85 (MSQNSSSLLE…TRVLSLRMGR (85 aa)) form a domain I, interacts with DnaA modulators region. The segment at 85-182 (RSFSLAVSVE…TPAHNPNREV (98 aa)) is domain II. The segment at 95–183 (PEQEIPETPA…PAHNPNREVS (89 aa)) is disordered. The span at 148-158 (APEPHPAPIAD) shows a compositional bias: pro residues. A domain III, AAA+ region region spans residues 183 to 399 (SLNPKYTFES…GALIRVSAYS (217 aa)). ATP-binding residues include Gly227, Gly229, Lys230, and Thr231. The domain IV, binds dsDNA stretch occupies residues 400–524 (SLINQPIDKE…TQLIKSRGRN (125 aa)).

The protein belongs to the DnaA family. Oligomerizes as a right-handed, spiral filament on DNA at oriC.

The protein resides in the cytoplasm. Plays an essential role in the initiation and regulation of chromosomal replication. ATP-DnaA binds to the origin of replication (oriC) to initiate formation of the DNA replication initiation complex once per cell cycle. Binds the DnaA box (a 9 base pair repeat at the origin) and separates the double-stranded (ds)DNA. Forms a right-handed helical filament on oriC DNA; dsDNA binds to the exterior of the filament while single-stranded (ss)DNA is stabiized in the filament's interior. The ATP-DnaA-oriC complex binds and stabilizes one strand of the AT-rich DNA unwinding element (DUE), permitting loading of DNA polymerase. After initiation quickly degrades to an ADP-DnaA complex that is not apt for DNA replication. Binds acidic phospholipids. The protein is Chromosomal replication initiator protein DnaA of Corynebacterium glutamicum (strain ATCC 13032 / DSM 20300 / JCM 1318 / BCRC 11384 / CCUG 27702 / LMG 3730 / NBRC 12168 / NCIMB 10025 / NRRL B-2784 / 534).